A 457-amino-acid polypeptide reads, in one-letter code: Metal tolerance protein C4 (457 aa).

Residues 1–115 (MQSSHRILSR…IEINDQHSQR (115 aa)) are Cytoplasmic-facing. A helical membrane pass occupies residues 116-136 (AVTTALWCNFLVFSLKFGVWW). Residues 137–141 (TSSSH) are Vacuolar-facing. Residues 142-162 (VIMAEVVHSVADFANQALLAY) form a helical membrane-spanning segment. Topologically, residues 163 to 183 (GLSSSRRAPDALHPYGYSKER) are cytoplasmic. The helical transmembrane segment at 184–204 (FVWSLISAVGIFCLGSGATIV) threads the bilayer. Topologically, residues 205 to 220 (NGVQNLWTSSPPPNME) are vacuolar. The helical transmembrane segment at 221-241 (LAAVVIGGSFLIEGASLLVAI) threads the bilayer. The Cytoplasmic segment spans residues 242 to 267 (QSVKKGAAQEGMTIRDYIWRGHDPTS). A helical transmembrane segment spans residues 268–288 (VAVMTEDGAAVAGLAIAAASL). The Vacuolar segment spans residues 289–297 (VAVRMTGNP). Residues 298 to 318 (IYDPIGSIVVGNLLGMVAIFL) form a helical membrane-spanning segment. At 319–457 (IQRNRHALIG…HNPTPTDPSL (139 aa)) the chain is on the cytoplasmic side.

This sequence belongs to the cation diffusion facilitator (CDF) transporter (TC 2.A.4) family.

The protein resides in the vacuole membrane. In terms of biological role, involved in sequestration of excess metal in the cytoplasm into vacuoles to maintain metal homeostasis. The chain is Metal tolerance protein C4 (MTPC4) from Arabidopsis thaliana (Mouse-ear cress).